The following is a 173-amino-acid chain: ATP synthase subunit d, mitochondrial (173 aa).

The N-terminal 23 residues, 1–23, are a transit peptide targeting the mitochondrion; sequence MAARSAALKIDWVKVTSSLGLRG.

This sequence belongs to the ATPase d subunit family. In terms of assembly, F-type ATPases have 2 components, CF(1) - the catalytic core - and CF(0) - the membrane proton channel. In yeast, the dimeric form of ATP synthase consists of 17 polypeptides: alpha, beta, gamma, delta, epsilon, 4 (B), 5 (OSCP), 6 (A), 8, 9 (C), d, E (Tim11), f, g, h, i/j and k.

Its subcellular location is the mitochondrion inner membrane. Its function is as follows. Mitochondrial membrane ATP synthase (F(1)F(0) ATP synthase or Complex V) produces ATP from ADP in the presence of a proton gradient across the membrane which is generated by electron transport complexes of the respiratory chain. F-type ATPases consist of two structural domains, F(1) - containing the extramembraneous catalytic core, and F(0) - containing the membrane proton channel, linked together by a central stalk and a peripheral stalk. During catalysis, ATP synthesis in the catalytic domain of F(1) is coupled via a rotary mechanism of the central stalk subunits to proton translocation. Part of the complex F(0) domain and the peripheric stalk, which acts as a stator to hold the catalytic alpha(3)beta(3) subcomplex and subunit a/ATP6 static relative to the rotary elements. The chain is ATP synthase subunit d, mitochondrial (atp7) from Aspergillus terreus (strain NIH 2624 / FGSC A1156).